The following is a 303-amino-acid chain: Dehydrodolichyl diphosphate synthase 1 (303 aa).

Residues 14–34 (LLFLFLIPCLFITSYIGFPVF) form a helical membrane-spanning segment.

The protein belongs to the UPP synthase family. Mg(2+) serves as cofactor. Expressed in low levels in the whole plant. Preferentially expressed in roots.

The protein resides in the endoplasmic reticulum membrane. The enzyme catalyses n isopentenyl diphosphate + (2E,6E)-farnesyl diphosphate = a di-trans,poly-cis-polyprenyl diphosphate + n diphosphate. It participates in protein modification; protein glycosylation. Catalyzes cis-prenyl chain elongation to produce the polyprenyl backbone of dolichol, a glycosyl carrier-lipid required for the biosynthesis of several classes of glycoprotein. This Arabidopsis thaliana (Mouse-ear cress) protein is Dehydrodolichyl diphosphate synthase 1 (DPS).